The following is a 326-amino-acid chain: DNA-directed RNA polymerase subunit alpha (326 aa).

The segment at 1-231 is alpha N-terminal domain (alpha-NTD); the sequence is MQTALLKPKI…DQLSVFAALE (231 aa). Residues 247–326 form an alpha C-terminal domain (alpha-CTD) region; sequence IDPILLRPVD…ENWPPAGLDK (80 aa).

It belongs to the RNA polymerase alpha chain family. Homodimer. The RNAP catalytic core consists of 2 alpha, 1 beta, 1 beta' and 1 omega subunit. When a sigma factor is associated with the core the holoenzyme is formed, which can initiate transcription.

It catalyses the reaction RNA(n) + a ribonucleoside 5'-triphosphate = RNA(n+1) + diphosphate. Functionally, DNA-dependent RNA polymerase catalyzes the transcription of DNA into RNA using the four ribonucleoside triphosphates as substrates. The sequence is that of DNA-directed RNA polymerase subunit alpha from Cupriavidus pinatubonensis (strain JMP 134 / LMG 1197) (Cupriavidus necator (strain JMP 134)).